We begin with the raw amino-acid sequence, 232 residues long: 2-C-methyl-D-erythritol 4-phosphate cytidylyltransferase (232 aa).

Belongs to the IspD/TarI cytidylyltransferase family. IspD subfamily.

It catalyses the reaction 2-C-methyl-D-erythritol 4-phosphate + CTP + H(+) = 4-CDP-2-C-methyl-D-erythritol + diphosphate. It participates in isoprenoid biosynthesis; isopentenyl diphosphate biosynthesis via DXP pathway; isopentenyl diphosphate from 1-deoxy-D-xylulose 5-phosphate: step 2/6. In terms of biological role, catalyzes the formation of 4-diphosphocytidyl-2-C-methyl-D-erythritol from CTP and 2-C-methyl-D-erythritol 4-phosphate (MEP). This chain is 2-C-methyl-D-erythritol 4-phosphate cytidylyltransferase, found in Deinococcus radiodurans (strain ATCC 13939 / DSM 20539 / JCM 16871 / CCUG 27074 / LMG 4051 / NBRC 15346 / NCIMB 9279 / VKM B-1422 / R1).